An 89-amino-acid polypeptide reads, in one-letter code: Small ribosomal subunit protein uS15 (89 aa).

The segment covering 1–10 (MPLNTEKKQE) has biased composition (basic and acidic residues). The tract at residues 1-22 (MPLNTEKKQELINSHQTHATDT) is disordered. Residues 11–22 (LINSHQTHATDT) are compositionally biased toward polar residues.

This sequence belongs to the universal ribosomal protein uS15 family. In terms of assembly, part of the 30S ribosomal subunit. Forms a bridge to the 50S subunit in the 70S ribosome, contacting the 23S rRNA.

Functionally, one of the primary rRNA binding proteins, it binds directly to 16S rRNA where it helps nucleate assembly of the platform of the 30S subunit by binding and bridging several RNA helices of the 16S rRNA. Forms an intersubunit bridge (bridge B4) with the 23S rRNA of the 50S subunit in the ribosome. In Synechococcus sp. (strain RCC307), this protein is Small ribosomal subunit protein uS15.